We begin with the raw amino-acid sequence, 488 residues long: Acetyl-coenzyme A carboxylase carboxyl transferase subunit beta, chloroplastic (488 aa).

The 268-residue stretch at L221–K488 folds into the CoA carboxyltransferase N-terminal domain. Residues C225, C228, C244, and C247 each contribute to the Zn(2+) site. The segment at C225–C247 adopts a C4-type zinc-finger fold.

It belongs to the AccD/PCCB family. Acetyl-CoA carboxylase is a heterohexamer composed of biotin carboxyl carrier protein, biotin carboxylase and 2 subunits each of ACCase subunit alpha and ACCase plastid-coded subunit beta (accD). Zn(2+) serves as cofactor.

It localises to the plastid. It is found in the chloroplast stroma. It catalyses the reaction N(6)-carboxybiotinyl-L-lysyl-[protein] + acetyl-CoA = N(6)-biotinyl-L-lysyl-[protein] + malonyl-CoA. It functions in the pathway lipid metabolism; malonyl-CoA biosynthesis; malonyl-CoA from acetyl-CoA: step 1/1. Component of the acetyl coenzyme A carboxylase (ACC) complex. Biotin carboxylase (BC) catalyzes the carboxylation of biotin on its carrier protein (BCCP) and then the CO(2) group is transferred by the transcarboxylase to acetyl-CoA to form malonyl-CoA. The polypeptide is Acetyl-coenzyme A carboxylase carboxyl transferase subunit beta, chloroplastic (Aethionema grandiflorum (Persian stone-cress)).